We begin with the raw amino-acid sequence, 252 residues long: Osmotin-like protein (252 aa).

A signal peptide spans 1 to 24 (MASSSAKILLPLSLLFTLLSLSQS).

The protein localises to the secreted. The protein resides in the cell wall. The polypeptide is Osmotin-like protein (Solanum lycopersicum (Tomato)).